A 232-amino-acid chain; its full sequence is Lipoprotein-releasing system ATP-binding protein LolD (232 aa).

Positions 11 to 232 (IEVTDLQRAF…LHDGRLIEEY (222 aa)) constitute an ABC transporter domain. Residue 47 to 54 (GPSGAGKS) participates in ATP binding.

It belongs to the ABC transporter superfamily. Lipoprotein translocase (TC 3.A.1.125) family. As to quaternary structure, the complex is composed of two ATP-binding proteins (LolD) and two transmembrane proteins (LolC and LolE).

Its subcellular location is the cell inner membrane. Functionally, part of the ABC transporter complex LolCDE involved in the translocation of mature outer membrane-directed lipoproteins, from the inner membrane to the periplasmic chaperone, LolA. Responsible for the formation of the LolA-lipoprotein complex in an ATP-dependent manner. This Zymomonas mobilis subsp. mobilis (strain ATCC 10988 / DSM 424 / LMG 404 / NCIMB 8938 / NRRL B-806 / ZM1) protein is Lipoprotein-releasing system ATP-binding protein LolD.